The sequence spans 630 residues: Peptidyl-prolyl cis-trans isomerase cyp15 (630 aa).

Residues 1–46 (MPEDSNTNDNNKRPLEDNNAVDGESDDDIGPMLPPPPGEDAPRKKK) form a disordered region. WD repeat units lie at residues 70-108 (MHRDVLSQVAVTKKDFIITTSVDGHLKFWKKTASGIEFV), 113-152 (SHLSSIVDISISANHELLATISDDTTLKVYDITNFDMINM), 157-198 (YKPK…KPLH), 203-242 (MHSKPVHIIEFNSRFNCVVSVDAIGMIEYWSPEAPFALPD), and 258-301 (RKKK…REYD). Positions 475 to 629 (LGTSAIIRTT…DDIKIINIDI (155 aa)) constitute a PPIase cyclophilin-type domain.

Belongs to the cyclophilin-type PPIase family.

The catalysed reaction is [protein]-peptidylproline (omega=180) = [protein]-peptidylproline (omega=0). Its function is as follows. PPIases accelerate the folding of proteins. It catalyzes the cis-trans isomerization of proline imidic peptide bonds in oligopeptides. The protein is Peptidyl-prolyl cis-trans isomerase cyp15 (cyp15) of Rhizopus delemar (strain RA 99-880 / ATCC MYA-4621 / FGSC 9543 / NRRL 43880) (Mucormycosis agent).